Reading from the N-terminus, the 1485-residue chain is Glutamate receptor ionotropic, NMDA 2B (1485 aa).

The N-terminal stretch at 1–26 (MKPRAECCSPKFWLVLAVLAVSGSRA) is a signal peptide. Over 27–557 (RSQKSPPSIG…SAFLEPFSAD (531 aa)) the chain is Extracellular. Asn-74 is a glycosylation site (N-linked (GlcNAc...) asparagine). Residues Cys-86 and Cys-321 are joined by a disulfide bond. Residues His-127 and Glu-284 each contribute to the Zn(2+) site. Residues Asn-341, Asn-348, Asn-444, and Asn-491 are each glycosylated (N-linked (GlcNAc...) asparagine). 2 cysteine pairs are disulfide-bonded: Cys-429–Cys-456 and Cys-436–Cys-457. L-glutamate-binding residues include Thr-514 and Arg-519. N-linked (GlcNAc...) asparagine glycosylation occurs at Asn-542. The helical transmembrane segment at 558–576 (VWVMMFVMLLIVSAVAVFV) threads the bilayer. Residues 577–603 (FEYFSPVGYNRCLADGREPGGPSFTIG) are Cytoplasmic-facing. An intramembrane region (discontinuously helical) is located at residues 604 to 623 (KAIWLLWGLVFNNSVPVQNP). A pore-forming region spans residues 604–623 (KAIWLLWGLVFNNSVPVQNP). Residues 624–630 (KGTTSKI) are Cytoplasmic-facing. The helical transmembrane segment at 631 to 646 (MVSVWAFFAVIFLASY) threads the bilayer. Topologically, residues 647 to 817 (TANLAAFMIQ…VMSSQLDIDN (171 aa)) are extracellular. A glycan (N-linked (GlcNAc...) asparagine) is linked at Asn-688. L-glutamate contacts are provided by residues 690–691 (ST) and Asp-732. Cys-746 and Cys-801 are joined by a disulfide. Residues 818-837 (MAGVFYMLGAAMALSLITFI) traverse the membrane as a helical segment. The Cytoplasmic portion of the chain corresponds to 838–1485 (CEHLFYWQFR…EKLSSIESDV (648 aa)). 4 positions are modified to phosphoserine: Ser-882, Ser-886, Ser-917, and Ser-920. 2 positions are modified to phosphotyrosine: Tyr-962 and Tyr-1039. Phosphoserine is present on residues Ser-1058, Ser-1061, and Ser-1064. The tract at residues 1074–1097 (EGNAAKRRKQQYKDSLKKRPASAK) is disordered. Residues Tyr-1109 and Tyr-1133 each carry the phosphotyrosine modification. A Phosphoserine modification is found at Ser-1143. The residue at position 1155 (Tyr-1155) is a Phosphotyrosine. The interval 1162-1194 (FKRDSVSGGGPCTNRSHLKHGAGDKHGVVSGVP) is disordered. Residues Ser-1255 and Ser-1259 each carry the phosphoserine modification. Over residues 1269-1278 (PVAVPSNAPS) the composition is skewed to low complexity. The tract at residues 1269–1302 (PVAVPSNAPSTKYPQSPTNSKAQKKTRNKLRRQH) is disordered. A compositionally biased stretch (polar residues) spans 1280-1289 (KYPQSPTNSK). Residues 1290–1301 (AQKKTRNKLRRQ) are compositionally biased toward basic residues. The segment at 1292–1304 (KKTRNKLRRQHSY) is interaction with DAPK1. The residue at position 1303 (Ser-1303) is a Phosphoserine; by DAPK1. At Tyr-1475 the chain carries Phosphotyrosine. A PDZ-binding motif is present at residues 1483–1485 (SDV).

It belongs to the glutamate-gated ion channel (TC 1.A.10.1) family. NR2B/GRIN2B subfamily. Heterotetramer. Forms heterotetrameric channels composed of two GluN1/zeta subunits (GRIN1), and two identical GluN2/epsilon subunits (GRIN2A, GRIN2B, GRIN2C or GRIN2D) or GluN3 subunits (GRIN3A or GRIN3B) (in vitro). Can also form heterotetrameric channels that contain at least two GluN1 subunits and at least two different GluN2 subunits (or a combination of one GluN2 and one GluN3 subunits) (in vitro). In vivo, the subunit composition may depend on the expression levels of the different subunits. Found in a complex with GRIN1, GRIN3A and PPP2CB. Found in a complex with GRIN1 and GRIN3B. Interacts with MAGI3. Interacts with HIP1 and Neto1. Interacts with PDZ domains of PATJ, DLG3 and DLG4. Interacts with DAPK1. Found in a complex with GRIN1 and PRR7. Interacts with PRR7. Interacts with CAMK2A. Interacts with ARC; preventing ARC oligomerization. Interacts with TMEM25. Interacts (via the extreme C-terminus) with FRMPD2 (via the second PDZ domain); the interaction is direct and is likely to promote NMDAR-mediated neural signal transmission. Interacts with FAM81A; the interaction facilitates condensate formation via liquid-liquid phase separation. In terms of processing, phosphorylated on tyrosine residues. Phosphorylation at Ser-1303 by DAPK1 enhances synaptic NMDA receptor channel activity.

The protein localises to the cell membrane. It is found in the postsynaptic cell membrane. Its subcellular location is the cell projection. It localises to the dendrite. The protein resides in the late endosome. The protein localises to the lysosome. It is found in the cytoplasm. Its subcellular location is the cytoskeleton. The enzyme catalyses Ca(2+)(in) = Ca(2+)(out). It carries out the reaction Na(+)(in) = Na(+)(out). The catalysed reaction is K(+)(in) = K(+)(out). Functionally, component of N-methyl-D-aspartate (NMDA) receptors (NMDARs) that function as heterotetrameric, ligand-gated cation channels with high calcium permeability and voltage-dependent block by Mg(2+). Participates in synaptic plasticity for learning and memory formation by contributing to the long-term depression (LTD) of hippocampus membrane currents. Channel activation requires binding of the neurotransmitter L-glutamate to the GluN2 subunit, glycine or D-serine binding to the GluN1 subunit, plus membrane depolarization to eliminate channel inhibition by Mg(2+). NMDARs mediate simultaneously the potasium efflux and the influx of calcium and sodium. Each GluN2 subunit confers differential attributes to channel properties, including activation, deactivation and desensitization kinetics, pH sensitivity, Ca2(+) permeability, and binding to allosteric modulators. In concert with DAPK1 at extrasynaptic sites, acts as a central mediator for stroke damage. Its phosphorylation at Ser-1303 by DAPK1 enhances synaptic NMDA receptor channel activity inducing injurious Ca2+ influx through them, resulting in an irreversible neuronal death. The polypeptide is Glutamate receptor ionotropic, NMDA 2B (Canis lupus familiaris (Dog)).